Here is a 372-residue protein sequence, read N- to C-terminus: Glutamate 5-kinase (372 aa).

ATP is bound at residue Lys-14. Substrate is bound by residues Ser-54, Asp-141, and Asn-153. 173–174 (TD) is a binding site for ATP. The 79-residue stretch at 280 to 358 (RGTLVLDDGA…DAIESLLGYS (79 aa)) folds into the PUA domain.

The protein belongs to the glutamate 5-kinase family.

Its subcellular location is the cytoplasm. The enzyme catalyses L-glutamate + ATP = L-glutamyl 5-phosphate + ADP. It functions in the pathway amino-acid biosynthesis; L-proline biosynthesis; L-glutamate 5-semialdehyde from L-glutamate: step 1/2. Its function is as follows. Catalyzes the transfer of a phosphate group to glutamate to form L-glutamate 5-phosphate. The polypeptide is Glutamate 5-kinase (Pseudomonas entomophila (strain L48)).